Consider the following 46-residue polypeptide: Thymosin beta-a (46 aa).

A compositionally biased stretch (polar residues) spans 21 to 30 (TNTAEKNTLP). Residues 21-46 (TNTAEKNTLPTKEDIDQEKKAAEGGK) are disordered. Residues 31–46 (TKEDIDQEKKAAEGGK) are compositionally biased toward basic and acidic residues.

This sequence belongs to the thymosin beta family.

The protein resides in the cytoplasm. It is found in the cytoskeleton. Its function is as follows. Plays an important role in the organization of the cytoskeleton. Binds to and sequesters actin monomers (G actin) and therefore inhibits actin polymerization. This chain is Thymosin beta-a, found in Cyprinus carpio (Common carp).